A 310-amino-acid polypeptide reads, in one-letter code: ADP-L-glycero-D-manno-heptose-6-epimerase (310 aa).

NADP(+)-binding positions include 10 to 11 (FI), 31 to 32 (DN), K38, K53, 75 to 79 (EGACS), and N92. Y140 acts as the Proton acceptor in catalysis. K144 contributes to the NADP(+) binding site. Position 169 (N169) interacts with substrate. Positions 170 and 178 each coordinate NADP(+). K178 functions as the Proton acceptor in the catalytic mechanism. Substrate is bound by residues S180, H187, 201-204 (FSGS), R209, and Y272.

It belongs to the NAD(P)-dependent epimerase/dehydratase family. HldD subfamily. In terms of assembly, homopentamer. NADP(+) is required as a cofactor.

It catalyses the reaction ADP-D-glycero-beta-D-manno-heptose = ADP-L-glycero-beta-D-manno-heptose. It participates in nucleotide-sugar biosynthesis; ADP-L-glycero-beta-D-manno-heptose biosynthesis; ADP-L-glycero-beta-D-manno-heptose from D-glycero-beta-D-manno-heptose 7-phosphate: step 4/4. Its function is as follows. Catalyzes the interconversion between ADP-D-glycero-beta-D-manno-heptose and ADP-L-glycero-beta-D-manno-heptose via an epimerization at carbon 6 of the heptose. This Pectobacterium carotovorum subsp. carotovorum (strain PC1) protein is ADP-L-glycero-D-manno-heptose-6-epimerase.